The primary structure comprises 486 residues: uncharacterized protein (486 aa).

The helical transmembrane segment at 18 to 38 (TLLQLFVFTVICVFVLSGLAI) threads the bilayer. A compositionally biased stretch (basic and acidic residues) spans 62–79 (DRQKQMEKQQDSGEKRSF). Disordered regions lie at residues 62-82 (DRQK…FEST) and 117-147 (IESS…GPQM). Residues 119-132 (SSSSSDSSSSSSSS) show a composition bias toward low complexity. Transmembrane regions (helical) follow at residues 324 to 344 (VVYL…MMSI), 365 to 385 (IGQF…LASV), and 451 to 471 (MLIL…LPSI).

Belongs to the ABC-4 integral membrane protein family.

The protein resides in the cell membrane. This is an uncharacterized protein from Bacillus subtilis (strain 168).